Here is a 499-residue protein sequence, read N- to C-terminus: Signal recognition particle subunit SRP54 2 (499 aa).

The segment at 1-295 is G-domain; that stretch reads MVLAELGGSI…DVKPFVSRLL (295 aa). Residues 108 to 115, 190 to 194, and 248 to 251 contribute to the GTP site; these read GLQGSGKT, DTSGR, and TKMD. The interval 296 to 499 is M-domain; that stretch reads GMGDWSGFMD…MGGMFGGGDK (204 aa).

It belongs to the GTP-binding SRP family. SRP54 subfamily. As to quaternary structure, component of a signal recognition particle (SRP) complex that consists of a 7SL RNA molecule of 300 nucleotides and six protein subunits: SRP72, SRP68, SRP54, SRP19, SRP14 and SRP9.

The protein localises to the cytoplasm. It localises to the endoplasmic reticulum. The catalysed reaction is GTP + H2O = GDP + phosphate + H(+). In terms of biological role, component of the signal recognition particle (SRP) complex, a ribonucleoprotein complex that mediates the cotranslational targeting of secretory and membrane proteins to the endoplasmic reticulum (ER). As part of the SRP complex, associates with the SRP receptor (SR) component SRPRA to target secretory proteins to the endoplasmic reticulum membrane. Binds to the signal sequence of presecretory proteins when they emerge from the ribosomes. Displays basal GTPase activity, and stimulates reciprocal GTPase activation of the SR subunit SRPRA. Forms a guanosine 5'-triphosphate (GTP)-dependent complex with the SR subunit SRPRA. SR compaction and GTPase mediated rearrangement of SR drive SRP-mediated cotranslational protein translocation into the ER. Requires the presence of SRP9/SRP14 and/or SRP19 to stably interact with RNA. The sequence is that of Signal recognition particle subunit SRP54 2 from Solanum lycopersicum (Tomato).